We begin with the raw amino-acid sequence, 67 residues long: Phycobilisome 7.8 kDa linker polypeptide, allophycocyanin-associated, core (67 aa).

The CpcD-like domain maps to 1 to 56 (MRMFRITACVPSQTRIRTQRELQNTYFTKLVPYDNSFREQQRIMKMGGKIVKVELA).

Belongs to the phycobilisome linker protein family.

It localises to the cellular thylakoid membrane. Rod linker protein, associated with allophycocyanin. Linker polypeptides determine the state of aggregation and the location of the disk-shaped phycobiliprotein units within the phycobilisome and modulate their spectroscopic properties in order to mediate a directed and optimal energy transfer. The polypeptide is Phycobilisome 7.8 kDa linker polypeptide, allophycocyanin-associated, core (apcC) (Synechocystis sp. (strain ATCC 27184 / PCC 6803 / Kazusa)).